A 548-amino-acid polypeptide reads, in one-letter code: Probable malate:quinone oxidoreductase (548 aa).

It belongs to the MQO family. It depends on FAD as a cofactor.

It catalyses the reaction (S)-malate + a quinone = a quinol + oxaloacetate. It participates in carbohydrate metabolism; tricarboxylic acid cycle; oxaloacetate from (S)-malate (quinone route): step 1/1. This chain is Probable malate:quinone oxidoreductase, found in Escherichia coli O6:H1 (strain CFT073 / ATCC 700928 / UPEC).